Here is a 128-residue protein sequence, read N- to C-terminus: uncharacterized protein (128 aa).

2 consecutive transmembrane segments (helical) span residues 33–53 and 61–81; these read LLYISIIFLFLNYVVDIVCYV and FFCWVFLNLGVIGIIITVIIY. Residues 99-120 show a composition bias toward polar residues; sequence DSLNQNVGESQSNEPPKYTSTF. Residues 99–128 form a disordered region; that stretch reads DSLNQNVGESQSNEPPKYTSTFMDELDKQD.

It is found in the membrane. This is an uncharacterized protein from Schizosaccharomyces pombe (strain 972 / ATCC 24843) (Fission yeast).